Here is a 387-residue protein sequence, read N- to C-terminus: Pepsin A (387 aa).

Residues 1 to 16 (MKKLLLLLGLVALSEC) form the signal peptide. Positions 17-61 (LYKVPLVKKKSLRQNLIENGLLKDFLAKHNVNPASKYFPTEAATE) are cleaved as a propeptide — activation peptide. In terms of domain architecture, Peptidase A1 spans 75–384 (YFGTIGIGTP…DRGNNRVGLA (310 aa)). Asp93 is an active-site residue. Cys106 and Cys111 are oxidised to a cystine. Ser129 carries the post-translational modification Phosphoserine. Cys267 and Cys271 are joined by a disulfide. Residue Asp276 is part of the active site. Cys310 and Cys343 are oxidised to a cystine.

The protein belongs to the peptidase A1 family.

It is found in the secreted. The enzyme catalyses Preferential cleavage: hydrophobic, preferably aromatic, residues in P1 and P1' positions. Cleaves 1-Phe-|-Val-2, 4-Gln-|-His-5, 13-Glu-|-Ala-14, 14-Ala-|-Leu-15, 15-Leu-|-Tyr-16, 16-Tyr-|-Leu-17, 23-Gly-|-Phe-24, 24-Phe-|-Phe-25 and 25-Phe-|-Tyr-26 bonds in the B chain of insulin.. In terms of biological role, shows particularly broad specificity; although bonds involving phenylalanine and leucine are preferred, many others are also cleaved to some extent. The protein is Pepsin A (PGA) of Suncus murinus (Asian house shrew).